The sequence spans 211 residues: Cytochrome c biogenesis ATP-binding export protein CcmA (211 aa).

In terms of domain architecture, ABC transporter spans 17 to 209 (LDVEDVTVFR…PSLAHVESFW (193 aa)). 49–56 (GPNGAGKS) lines the ATP pocket.

This sequence belongs to the ABC transporter superfamily. CcmA exporter (TC 3.A.1.107) family. In terms of assembly, the complex is composed of two ATP-binding proteins (CcmA) and two transmembrane proteins (CcmB).

It is found in the cell inner membrane. The enzyme catalyses heme b(in) + ATP + H2O = heme b(out) + ADP + phosphate + H(+). Its function is as follows. Part of the ABC transporter complex CcmAB involved in the biogenesis of c-type cytochromes; once thought to export heme, this seems not to be the case, but its exact role is uncertain. Responsible for energy coupling to the transport system. The protein is Cytochrome c biogenesis ATP-binding export protein CcmA of Gluconobacter oxydans (strain 621H) (Gluconobacter suboxydans).